The primary structure comprises 186 residues: Acireductone dioxygenase (186 aa).

Fe(2+) contacts are provided by His-96, His-98, Glu-102, and His-140. Residues His-96, His-98, Glu-102, and His-140 each contribute to the Ni(2+) site.

The protein belongs to the acireductone dioxygenase (ARD) family. Monomer. Fe(2+) is required as a cofactor. Ni(2+) serves as cofactor.

The catalysed reaction is 1,2-dihydroxy-5-(methylsulfanyl)pent-1-en-3-one + O2 = 3-(methylsulfanyl)propanoate + CO + formate + 2 H(+). The enzyme catalyses 1,2-dihydroxy-5-(methylsulfanyl)pent-1-en-3-one + O2 = 4-methylsulfanyl-2-oxobutanoate + formate + 2 H(+). It functions in the pathway amino-acid biosynthesis; L-methionine biosynthesis via salvage pathway; L-methionine from S-methyl-5-thio-alpha-D-ribose 1-phosphate: step 5/6. Functionally, catalyzes 2 different reactions between oxygen and the acireductone 1,2-dihydroxy-3-keto-5-methylthiopentene (DHK-MTPene) depending upon the metal bound in the active site. Fe-containing acireductone dioxygenase (Fe-ARD) produces formate and 2-keto-4-methylthiobutyrate (KMTB), the alpha-ketoacid precursor of methionine in the methionine recycle pathway. Ni-containing acireductone dioxygenase (Ni-ARD) produces methylthiopropionate, carbon monoxide and formate, and does not lie on the methionine recycle pathway. This is Acireductone dioxygenase from Methylococcus capsulatus (strain ATCC 33009 / NCIMB 11132 / Bath).